Reading from the N-terminus, the 273-residue chain is Formamidopyrimidine-DNA glycosylase (273 aa).

The active-site Schiff-base intermediate with DNA is P2. Residue E3 is the Proton donor of the active site. Catalysis depends on K58, which acts as the Proton donor; for beta-elimination activity. Positions 92, 111, and 153 each coordinate DNA. An FPG-type zinc finger spans residues 238–272 (KVYGREGQSCLSCSSTIIKIKHSGRSTFYCKTCQY). R262 acts as the Proton donor; for delta-elimination activity in catalysis.

The protein belongs to the FPG family. Monomer. Requires Zn(2+) as cofactor.

The catalysed reaction is Hydrolysis of DNA containing ring-opened 7-methylguanine residues, releasing 2,6-diamino-4-hydroxy-5-(N-methyl)formamidopyrimidine.. It carries out the reaction 2'-deoxyribonucleotide-(2'-deoxyribose 5'-phosphate)-2'-deoxyribonucleotide-DNA = a 3'-end 2'-deoxyribonucleotide-(2,3-dehydro-2,3-deoxyribose 5'-phosphate)-DNA + a 5'-end 5'-phospho-2'-deoxyribonucleoside-DNA + H(+). In terms of biological role, involved in base excision repair of DNA damaged by oxidation or by mutagenic agents. Acts as a DNA glycosylase that recognizes and removes damaged bases. Has a preference for oxidized purines, such as 7,8-dihydro-8-oxoguanine (8-oxoG). Has AP (apurinic/apyrimidinic) lyase activity and introduces nicks in the DNA strand. Cleaves the DNA backbone by beta-delta elimination to generate a single-strand break at the site of the removed base with both 3'- and 5'-phosphates. This chain is Formamidopyrimidine-DNA glycosylase, found in Rickettsia peacockii (strain Rustic).